The primary structure comprises 743 residues: MSQDIFTPTRVTCQVGGKEIIIESGRMANQAHGEVWIQCGGTVVLVTVCSQPLEFDKGFFPLTVEYSEKMYAAGRIPGSFFRREIGRPSERETLVARLIDRPIRPLFPKGLNEDVQVLASVISADQENESDVLALTGASAALMLSPLPFEGPVAGGRIARVGGQFVLNPTFEQQAQSDLNIVFAASGDALTMVEGDARFISEDVIIEALEWGRLQILPLVEIQHKLRELCGKPKMNFTPHQDDEALVACVHELALANGMEEALRVPEKMARKDARKAVKDKVMETLKADPAWAENEAALKAVSDILGGLEKKLVRARIVNEGTRIDGRDTTTVRPIQIQTGLLPRAHGSALFRRGETKSLVVATLGSSTDEQRMDSLTGDVTKRFMLHYNFPPFSVGEVKPVRVSRREIGHGALAEKSLRPVLPADADFPFTLRVVAETMESNGSSSMAAVCGGSLSLMDAGVPVSAPVAGVAMGLIKEGEKFIVLTDILGDEDALGDMDFKIAGTAEGVTGVQMDIKITGLTTEIMRTAMQQAREGRLHILEEMAKAIASPRKELSRYAPQHAEVFVNPDIIRLIIGPGGKNIKAITAATGASVDIEDSGRVSIFAPTAEALEKAREMVSYYDQRPDLGKNYNAKVRKIMEIGAIVEVLPNVEALVHVSQLDVNRVEQPGDVARLGEDMLVKVIEINGDRIRASRKAVLLEEQGHPWNPEDTARPQRSDRGDRGDRRGDRGGRDRRDRGDRR.

Aspartate 494 and aspartate 500 together coordinate Mg(2+). Positions 561 to 620 (PQHAEVFVNPDIIRLIIGPGGKNIKAITAATGASVDIEDSGRVSIFAPTAEALEKAREMV) constitute a KH domain. The 75-residue stretch at 630–704 (GKNYNAKVRK…SRKAVLLEEQ (75 aa)) folds into the S1 motif domain. Positions 702-743 (EEQGHPWNPEDTARPQRSDRGDRGDRRGDRGGRDRRDRGDRR) are disordered. Residues 712–743 (DTARPQRSDRGDRGDRRGDRGGRDRRDRGDRR) are compositionally biased toward basic and acidic residues.

Belongs to the polyribonucleotide nucleotidyltransferase family. The cofactor is Mg(2+).

It is found in the cytoplasm. The catalysed reaction is RNA(n+1) + phosphate = RNA(n) + a ribonucleoside 5'-diphosphate. Involved in mRNA degradation. Catalyzes the phosphorolysis of single-stranded polyribonucleotides processively in the 3'- to 5'-direction. In Desulfovibrio desulfuricans (strain ATCC 27774 / DSM 6949 / MB), this protein is Polyribonucleotide nucleotidyltransferase.